The following is a 31-amino-acid chain: Cytochrome b6-f complex subunit 6 (31 aa).

A helical membrane pass occupies residues 4–24 (IISYFLFLIGALTLALVLFIG).

This sequence belongs to the PetL family. As to quaternary structure, the 4 large subunits of the cytochrome b6-f complex are cytochrome b6, subunit IV (17 kDa polypeptide, PetD), cytochrome f and the Rieske protein, while the 4 small subunits are PetG, PetL, PetM and PetN. The complex functions as a dimer.

It is found in the plastid. The protein localises to the chloroplast thylakoid membrane. Its function is as follows. Component of the cytochrome b6-f complex, which mediates electron transfer between photosystem II (PSII) and photosystem I (PSI), cyclic electron flow around PSI, and state transitions. PetL is important for photoautotrophic growth as well as for electron transfer efficiency and stability of the cytochrome b6-f complex. In Marchantia polymorpha (Common liverwort), this protein is Cytochrome b6-f complex subunit 6.